Consider the following 510-residue polypeptide: GMP synthase [glutamine-hydrolyzing] (510 aa).

In terms of domain architecture, Glutamine amidotransferase type-1 spans 5–195; the sequence is LVLVVDFGGQ…LFNVCNLKGD (191 aa). C82 acts as the Nucleophile in catalysis. Active-site residues include H169 and E171. The GMPS ATP-PPase domain maps to 196-385; it reads WSMSSFAEQQ…LGIPHKLVWR (190 aa). ATP is bound at residue 223 to 229; that stretch reads SGGVDSS.

Homodimer.

The enzyme catalyses XMP + L-glutamine + ATP + H2O = GMP + L-glutamate + AMP + diphosphate + 2 H(+). The protein operates within purine metabolism; GMP biosynthesis; GMP from XMP (L-Gln route): step 1/1. Catalyzes the synthesis of GMP from XMP. The protein is GMP synthase [glutamine-hydrolyzing] of Clostridium botulinum (strain ATCC 19397 / Type A).